A 286-amino-acid chain; its full sequence is CDP-diacylglycerol--serine O-phosphatidyltransferase (286 aa).

6 helical membrane-spanning segments follow: residues Ile15–Ala35, Ile74–Ser94, Met95–Leu115, Glu135–Leu155, Gly167–Met187, and Leu207–Ile227.

It belongs to the CDP-alcohol phosphatidyltransferase class-I family.

The protein localises to the cell membrane. It carries out the reaction a CDP-1,2-diacyl-sn-glycerol + L-serine = a 1,2-diacyl-sn-glycero-3-phospho-L-serine + CMP + H(+). The sequence is that of CDP-diacylglycerol--serine O-phosphatidyltransferase (pssA) from Mycobacterium tuberculosis (strain ATCC 25618 / H37Rv).